The primary structure comprises 507 residues: Light-independent protochlorophyllide reductase subunit B (507 aa).

Asp36 serves as a coordination point for [4Fe-4S] cluster. Catalysis depends on Asp293, which acts as the Proton donor. 428–429 (GM) contributes to the substrate binding site.

This sequence belongs to the ChlB/BchB/BchZ family. As to quaternary structure, protochlorophyllide reductase is composed of three subunits; ChlL, ChlN and ChlB. Forms a heterotetramer of two ChlB and two ChlN subunits. It depends on [4Fe-4S] cluster as a cofactor.

It is found in the plastid. The protein localises to the chloroplast. It carries out the reaction chlorophyllide a + oxidized 2[4Fe-4S]-[ferredoxin] + 2 ADP + 2 phosphate = protochlorophyllide a + reduced 2[4Fe-4S]-[ferredoxin] + 2 ATP + 2 H2O. The protein operates within porphyrin-containing compound metabolism; chlorophyll biosynthesis (light-independent). Component of the dark-operative protochlorophyllide reductase (DPOR) that uses Mg-ATP and reduced ferredoxin to reduce ring D of protochlorophyllide (Pchlide) to form chlorophyllide a (Chlide). This reaction is light-independent. The NB-protein (ChlN-ChlB) is the catalytic component of the complex. The sequence is that of Light-independent protochlorophyllide reductase subunit B from Porphyra purpurea (Red seaweed).